The primary structure comprises 151 residues: Pyruvoyl-dependent arginine decarboxylase (151 aa).

Pyruvic acid (Ser) is present on Ser-42.

It belongs to the PdaD family. Pyruvate is required as a cofactor.

The enzyme catalyses L-arginine + H(+) = agmatine + CO2. In Methanothermobacter thermautotrophicus (strain ATCC 29096 / DSM 1053 / JCM 10044 / NBRC 100330 / Delta H) (Methanobacterium thermoautotrophicum), this protein is Pyruvoyl-dependent arginine decarboxylase.